A 510-amino-acid chain; its full sequence is MSVSALNPTRLPGSLSGLLQVAGLLGLLLLLLKAAQLYLHRQWLLRALQQFPCPPFHWLLGHSREFQNGHELQVMLKWVEKFPSACPRWLWGSRAHLLIYDPDYMKVILGRSDPKAQGSYRFLAPWIGYGLLLLNGQTWFQHRRMLTPAFHYDILKPYVGLMADSVQIMLDKWEQLVSQDSSLEVFQDISLMTLDTIMKCAFSHQGSVQLDRNSQSYIQAVGDLNNLFFSRVRNVFHQSDTIYRLSPEGRLSHRACQLAHEHTDRVIQQRKAQLQQEGELEKVRRKRRLDFLDVLLFAKMENGSSLSDQDLRAEVDTFMFEGHDTTASGISWIFYALATHPEHQHRCREEIQGLLGDGASITWEHLDQMPYTTMCIKEALRLYPPVPGVGRQLSSPVTFPDGRSLPKGVIVTLSIYALHHNPKVWPNPEVFDPFPFAPGSARHSHAFLPFSGGPRNCIGKQFAMNELKVAVALTLVRFELLPDPKRVPDQKPRLVLKSSNGIHLRLRKLR.

A propeptide spanning residues 1–4 (MSVS) is cleaved from the precursor. Heme contacts are provided by Glu-321 and Cys-457.

Belongs to the cytochrome P450 family. It depends on heme as a cofactor. As to expression, liver; kidney.

It localises to the endoplasmic reticulum membrane. Its subcellular location is the microsome membrane. The catalysed reaction is an omega-methyl-long-chain fatty acid + reduced [NADPH--hemoprotein reductase] + O2 = an omega-hydroxy-long-chain fatty acid + oxidized [NADPH--hemoprotein reductase] + H2O + H(+). In terms of biological role, cytochromes P450 are a group of heme-thiolate monooxygenases. In liver microsomes, this enzyme is involved in an NADPH-dependent electron transport pathway. It oxidizes a variety of structurally unrelated compounds, including steroids, fatty acids, and xenobiotics. The kidney P-450 system is rather specialized for the omega-hydroxylation of fatty acids. Both P450-KA1 and P450-KA2 catalyze the omega- and (omega-1)-hydroxylation of various fatty acids with no drug-metabolizing activity, and hydroxylate prostaglandin A1 and A2 solely at the omega-position. This Oryctolagus cuniculus (Rabbit) protein is Cytochrome P450 4A6 (CYP4A6).